Here is a 140-residue protein sequence, read N- to C-terminus: Glycine cleavage system H protein (140 aa).

One can recognise a Lipoyl-binding domain in the interval 22 to 104 (EVVIGITRFA…YGKGWMLRLK (83 aa)). Lys-63 bears the N6-lipoyllysine mark.

The protein belongs to the GcvH family. As to quaternary structure, the glycine cleavage system is composed of four proteins: P, T, L and H. (R)-lipoate serves as cofactor.

Its function is as follows. The glycine cleavage system catalyzes the degradation of glycine. The H protein shuttles the methylamine group of glycine from the P protein to the T protein. This is Glycine cleavage system H protein from Magnetococcus marinus (strain ATCC BAA-1437 / JCM 17883 / MC-1).